We begin with the raw amino-acid sequence, 798 residues long: Vacuolar protein sorting-associated protein 53 homolog (798 aa).

The protein belongs to the VPS53 family. In terms of assembly, component of the Golgi-associated retrograde protein (GARP) complex, also called VFT (VPS fifty-three) complex, composed of vps-51, vps-52, vps-53 and vps-54. Within the complex interacts with vps-51, vps-52 and vps-54. In terms of tissue distribution, ubiquitously expressed, with particularly strong expression in neuronal cells. Specifically expressed in head and tail neurons and in the pharynx and ventral cord motor neurons.

The protein resides in the golgi apparatus. It localises to the trans-Golgi network membrane. It is found in the endosome membrane. The protein localises to the perikaryon. Its subcellular location is the cytoplasm. The protein resides in the perinuclear region. Acts as a component of the GARP complex that is involved in retrograde transport from early and late endosomes to the trans-Golgi network (TGN). The GARP complex facilitates tethering as well as SNARE complex assembly at the Golgi. Plays a role in the trafficking of cargo to dense-core vesicles, probably through association with the EARP-interacting protein eipr-1. Important for neuronal function. In Caenorhabditis elegans, this protein is Vacuolar protein sorting-associated protein 53 homolog.